A 325-amino-acid polypeptide reads, in one-letter code: GTP 3',8-cyclase (325 aa).

The Radical SAM core domain maps to 1–226 (MNTVNYLRIS…EGACYGNGPA (226 aa)). Arg8 lines the GTP pocket. Positions 15 and 19 each coordinate [4Fe-4S] cluster. Tyr21 contacts S-adenosyl-L-methionine. Cys22 is a binding site for [4Fe-4S] cluster. Position 60 (Arg60) interacts with GTP. Gly64 provides a ligand contact to S-adenosyl-L-methionine. GTP is bound at residue Ser91. Ser115 contacts S-adenosyl-L-methionine. Lys152 contributes to the GTP binding site. Met186 lines the S-adenosyl-L-methionine pocket. Positions 249 and 252 each coordinate [4Fe-4S] cluster. Residue 254 to 256 (RVR) participates in GTP binding. Cys266 serves as a coordination point for [4Fe-4S] cluster.

Belongs to the radical SAM superfamily. MoaA family. In terms of assembly, monomer and homodimer. The cofactor is [4Fe-4S] cluster.

The catalysed reaction is GTP + AH2 + S-adenosyl-L-methionine = (8S)-3',8-cyclo-7,8-dihydroguanosine 5'-triphosphate + 5'-deoxyadenosine + L-methionine + A + H(+). The protein operates within cofactor biosynthesis; molybdopterin biosynthesis. Its function is as follows. Catalyzes the cyclization of GTP to (8S)-3',8-cyclo-7,8-dihydroguanosine 5'-triphosphate. In Gloeobacter violaceus (strain ATCC 29082 / PCC 7421), this protein is GTP 3',8-cyclase.